The following is a 240-amino-acid chain: UDP-2,3-diacylglucosamine hydrolase (240 aa).

Mn(2+)-binding residues include D8, H10, D41, N79, and H114. Substrate is bound at residue 79 to 80 (NR). Substrate contacts are provided by D122, S160, N164, K167, and H195. Mn(2+)-binding residues include H195 and H197.

It belongs to the LpxH family. It depends on Mn(2+) as a cofactor.

The protein resides in the cell inner membrane. The enzyme catalyses UDP-2-N,3-O-bis[(3R)-3-hydroxytetradecanoyl]-alpha-D-glucosamine + H2O = 2-N,3-O-bis[(3R)-3-hydroxytetradecanoyl]-alpha-D-glucosaminyl 1-phosphate + UMP + 2 H(+). The protein operates within glycolipid biosynthesis; lipid IV(A) biosynthesis; lipid IV(A) from (3R)-3-hydroxytetradecanoyl-[acyl-carrier-protein] and UDP-N-acetyl-alpha-D-glucosamine: step 4/6. Its function is as follows. Hydrolyzes the pyrophosphate bond of UDP-2,3-diacylglucosamine to yield 2,3-diacylglucosamine 1-phosphate (lipid X) and UMP by catalyzing the attack of water at the alpha-P atom. Involved in the biosynthesis of lipid A, a phosphorylated glycolipid that anchors the lipopolysaccharide to the outer membrane of the cell. This Escherichia coli O81 (strain ED1a) protein is UDP-2,3-diacylglucosamine hydrolase.